The following is a 448-amino-acid chain: N-succinylarginine dihydrolase (448 aa).

Substrate is bound by residues 19–28 (GGLSYGNVAS), Asn110, and 137–138 (HR). Glu174 is an active-site residue. Residue Arg214 coordinates substrate. Residue His250 is part of the active site. Substrate is bound by residues Asp252 and Asn365. Cys371 functions as the Nucleophile in the catalytic mechanism.

Belongs to the succinylarginine dihydrolase family. Homodimer.

The catalysed reaction is N(2)-succinyl-L-arginine + 2 H2O + 2 H(+) = N(2)-succinyl-L-ornithine + 2 NH4(+) + CO2. The protein operates within amino-acid degradation; L-arginine degradation via AST pathway; L-glutamate and succinate from L-arginine: step 2/5. Catalyzes the hydrolysis of N(2)-succinylarginine into N(2)-succinylornithine, ammonia and CO(2). This is N-succinylarginine dihydrolase from Pseudomonas fluorescens (strain ATCC BAA-477 / NRRL B-23932 / Pf-5).